A 269-amino-acid chain; its full sequence is Protein LNK3 (269 aa).

As to quaternary structure, interacts with REV8.

Its function is as follows. Probable transcriptional coactivator. This is Protein LNK3 from Arabidopsis thaliana (Mouse-ear cress).